We begin with the raw amino-acid sequence, 235 residues long: Ubiquinone/menaquinone biosynthesis C-methyltransferase UbiE (235 aa).

S-adenosyl-L-methionine-binding residues include T59, D84, and S123.

Belongs to the class I-like SAM-binding methyltransferase superfamily. MenG/UbiE family.

It carries out the reaction a 2-demethylmenaquinol + S-adenosyl-L-methionine = a menaquinol + S-adenosyl-L-homocysteine + H(+). The catalysed reaction is a 2-methoxy-6-(all-trans-polyprenyl)benzene-1,4-diol + S-adenosyl-L-methionine = a 5-methoxy-2-methyl-3-(all-trans-polyprenyl)benzene-1,4-diol + S-adenosyl-L-homocysteine + H(+). The protein operates within quinol/quinone metabolism; menaquinone biosynthesis; menaquinol from 1,4-dihydroxy-2-naphthoate: step 2/2. It functions in the pathway cofactor biosynthesis; ubiquinone biosynthesis. Functionally, methyltransferase required for the conversion of demethylmenaquinol (DMKH2) to menaquinol (MKH2) and the conversion of 2-polyprenyl-6-methoxy-1,4-benzoquinol (DDMQH2) to 2-polyprenyl-3-methyl-6-methoxy-1,4-benzoquinol (DMQH2). In Campylobacter jejuni subsp. jejuni serotype O:23/36 (strain 81-176), this protein is Ubiquinone/menaquinone biosynthesis C-methyltransferase UbiE.